Reading from the N-terminus, the 87-residue chain is Translation initiation factor IF-1 2 (87 aa).

An S1-like domain is found at 1–72 (MAKEELLEMQ…SKGRITFRHI (72 aa)).

It belongs to the IF-1 family. Component of the 30S ribosomal translation pre-initiation complex which assembles on the 30S ribosome in the order IF-2 and IF-3, IF-1 and N-formylmethionyl-tRNA(fMet); mRNA recruitment can occur at any time during PIC assembly.

The protein resides in the cytoplasm. In terms of biological role, one of the essential components for the initiation of protein synthesis. Stabilizes the binding of IF-2 and IF-3 on the 30S subunit to which N-formylmethionyl-tRNA(fMet) subsequently binds. Helps modulate mRNA selection, yielding the 30S pre-initiation complex (PIC). Upon addition of the 50S ribosomal subunit IF-1, IF-2 and IF-3 are released leaving the mature 70S translation initiation complex. The protein is Translation initiation factor IF-1 2 of Dechloromonas aromatica (strain RCB).